Reading from the N-terminus, the 192-residue chain is Large ribosomal subunit protein bL9 (192 aa).

The disordered stretch occupies residues 172-192 (DALRPEDFFDPEADGVDEDEA). Residues 179–192 (FFDPEADGVDEDEA) are compositionally biased toward acidic residues.

This sequence belongs to the bacterial ribosomal protein bL9 family.

In terms of biological role, binds to the 23S rRNA. This is Large ribosomal subunit protein bL9 from Rhizobium johnstonii (strain DSM 114642 / LMG 32736 / 3841) (Rhizobium leguminosarum bv. viciae).